Reading from the N-terminus, the 602-residue chain is Fructan 1-exohydrolase (602 aa).

The N-terminal stretch at 1–19 (MAQAWAFLLLPVLLLSSYA) is a signal peptide. D81 is a catalytic residue. N-linked (GlcNAc...) asparagine glycosylation is found at N174, N242, and N254. C452 and C498 are joined by a disulfide.

This sequence belongs to the glycosyl hydrolase 32 family. As to expression, detected in leaves, with maximum levels at the leaf tip.

It catalyses the reaction Hydrolysis of terminal, non-reducing (2-&gt;1)-linked beta-D-fructofuranose residues in fructans.. Its activity is regulated as follows. Inhibited by sucrose. Hydrolyzes inulin-type beta-(2,1)-fructans. Has low activity against beta-(2,6)-linked fructans. May play a role as a beta-(2,1)-trimmer during graminan biosynthesis. The chain is Fructan 1-exohydrolase from Bromus pictus (Patagonian grass).